The primary structure comprises 138 residues: Mitochondrial import inner membrane translocase subunit tim-16 (138 aa).

The span at Thr32–Thr43 shows a compositional bias: low complexity. Disordered stretches follow at residues Thr32–Ala58 and Leu118–Glu138. The segment covering Gly44–Ala56 has biased composition (polar residues). The tract at residues Glu66–Ser119 is J-like.

This sequence belongs to the TIM16/PAM16 family. Probable component of the PAM complex at least composed of a mitochondrial HSP70 protein, GrpE, tim-44, tim-16 and tim-14. Associates with the TIM23 complex.

The protein resides in the mitochondrion inner membrane. In terms of biological role, regulates ATP-dependent protein translocation into the mitochondrial matrix. The protein is Mitochondrial import inner membrane translocase subunit tim-16 of Caenorhabditis briggsae.